Reading from the N-terminus, the 607-residue chain is CUB and zona pellucida-like domain-containing protein 1 (607 aa).

An N-terminal signal peptide occupies residues 1 to 19 (MEVTGRLFIWAILAVSCGA). Cys17 and Cys58 are oxidised to a cystine. CUB domains lie at 20–146 (QLNS…YFFS) and 154–265 (CGGD…YTSI). The Lumenal portion of the chain corresponds to 20–568 (QLNSTEAEGK…AEISNQPLSR (549 aa)). Asn22, Asn57, and Asn67 each carry an N-linked (GlcNAc...) asparagine glycan. 3 disulfide bridges follow: Cys85-Cys107, Cys154-Cys180, and Cys207-Cys229. The ZP domain maps to 276 to 519 (SCVSDKMRVI…SRCNQGCVPR (244 aa)). An N-linked (GlcNAc...) asparagine glycan is attached at Asn419. An intrachain disulfide couples Cys442 to Cys498. The chain crosses the membrane as a helical span at residues 569–589 (LYLFSFMVLALNVVIVAITTV). Over 590 to 607 (KHFLNRWMDHRYQKLQVY) the chain is Cytoplasmic.

As to expression, highly expressed in pancreatic acinar cells. Also expressed in epithelium of the uterus during late pregnancy but not detected in non-pregnant uterus or in a variety of other adult and fetal tissues.

It localises to the zymogen granule membrane. Localized to zymogen granules, where it functions in trypsinogen activation. May indirectly regulate cell motility, cell-cell and cell/extracellular matrix interactions. This chain is CUB and zona pellucida-like domain-containing protein 1, found in Mus musculus (Mouse).